A 432-amino-acid polypeptide reads, in one-letter code: Glutamyl-tRNA reductase (432 aa).

Substrate-binding positions include 55–58 (TCNR), S114, 119–121 (ETQ), and Q125. C56 acts as the Nucleophile in catalysis. Residue 194–199 (GAGEMI) participates in NADP(+) binding.

The protein belongs to the glutamyl-tRNA reductase family. Homodimer.

It catalyses the reaction (S)-4-amino-5-oxopentanoate + tRNA(Glu) + NADP(+) = L-glutamyl-tRNA(Glu) + NADPH + H(+). The protein operates within porphyrin-containing compound metabolism; protoporphyrin-IX biosynthesis; 5-aminolevulinate from L-glutamyl-tRNA(Glu): step 1/2. In terms of biological role, catalyzes the NADPH-dependent reduction of glutamyl-tRNA(Glu) to glutamate 1-semialdehyde (GSA). The polypeptide is Glutamyl-tRNA reductase (Burkholderia thailandensis (strain ATCC 700388 / DSM 13276 / CCUG 48851 / CIP 106301 / E264)).